Here is a 748-residue protein sequence, read N- to C-terminus: Structure-specific endonuclease subunit SLX4 (748 aa).

The segment covering 62–75 (KSVTAQKSPMTQET) has biased composition (polar residues). Residues 62 to 104 (KSVTAQKSPMTQETTKNDTERNKDVDKSCNPVSTSHPDLGGSN) are disordered. Residue threonine 72 is modified to Phosphothreonine; by ATR and ATM. Positions 76 to 88 (TKNDTERNKDVDK) are enriched in basic and acidic residues. The residue at position 113 (threonine 113) is a Phosphothreonine; by ATR and ATM. Disordered stretches follow at residues 215-236 (IKTQ…KGEK) and 277-303 (EKSS…PPEL). Residues 222–236 (NSDKPPRARNNKGEK) show a composition bias toward basic and acidic residues. Over residues 277 to 298 (EKSSNSLDNQESSQQRLWTASQ) the composition is skewed to polar residues. Serine 289 carries the post-translational modification Phosphoserine; by ATR and ATM. Threonine 319 is modified (phosphothreonine; by ATR and ATM). Phosphoserine; by ATR and ATM is present on residues serine 329 and serine 355. The span at 591–602 (ISTKDSTQNPTT) shows a compositional bias: polar residues. The tract at residues 591 to 610 (ISTKDSTQNPTTSNDIIDTS) is disordered.

This sequence belongs to the SLX4 family. Forms a heterodimer with SLX1. Interacts with RAD1; catalytic subunit of the RAD1-RAD10 endonuclease. Interacts with RTT107. Post-translationally, phosphorylated by ATR (MEC1) and ATM (TEL1) upon DNA damage. This appears to be required for the function with the RAD1-RAD10 endonuclease.

The protein localises to the nucleus. It localises to the cytoplasm. In terms of biological role, regulatory subunit that interacts with and increases the activity of different structure-specific endonucleases. Has several distinct roles in protecting genome stability by resolving diverse forms of deleterious DNA structures. Component of the SLX1-SLX4 structure-specific endonuclease that resolves DNA secondary structures generated during DNA repair and recombination. Has endonuclease activity towards branched DNA substrates, introducing single-strand cuts in duplex DNA close to junctions with ss-DNA. Has a preference for simple Y, 5'-flap and replication fork-like structures. It cleaves the strand bearing the 5'-non-homologous arm at the branch site junction and generates ligatable, nicked products from the 5'-flap or replication fork substrates. Plays a critical role in maintaining the integrity of the ribosomal DNA (rDNA) loci, where it has a role in re-starting stalled replication forks. Has Holliday junction resolvase activity in vitro. Interacts with the structure-specific RAD1-RAD10 endonuclease and promotes RAD1-RAD10-dependent 3'-non-homologous tail removal (NHTR) during repair of double-strand breaks by single-strand annealing. SLX4 also promotes recovery from DNA-alkylation-induced replisome stalling during DNA replication by facilitating the error-free mode of lesion bypass. This does not require SLX1 or RAD1-RAD10, but probably RTT107. This chain is Structure-specific endonuclease subunit SLX4, found in Saccharomyces cerevisiae (strain RM11-1a) (Baker's yeast).